Reading from the N-terminus, the 96-residue chain is Co-chaperonin GroES (96 aa).

This sequence belongs to the GroES chaperonin family. As to quaternary structure, heptamer of 7 subunits arranged in a ring. Interacts with the chaperonin GroEL.

It localises to the cytoplasm. Functionally, together with the chaperonin GroEL, plays an essential role in assisting protein folding. The GroEL-GroES system forms a nano-cage that allows encapsulation of the non-native substrate proteins and provides a physical environment optimized to promote and accelerate protein folding. GroES binds to the apical surface of the GroEL ring, thereby capping the opening of the GroEL channel. This is Co-chaperonin GroES from Histophilus somni (strain 129Pt) (Haemophilus somnus).